We begin with the raw amino-acid sequence, 54 residues long: uncharacterized protein (54 aa).

The segment at 1-54 (MWTLKARKEHTGISGKPTARTDRHGSTRSGDSELQASARRFSRLPDRCGAQGVT) is disordered.

This is an uncharacterized protein from Mycobacterium tuberculosis (strain ATCC 25618 / H37Rv).